We begin with the raw amino-acid sequence, 223 residues long: Ribonuclease 3 (223 aa).

In terms of domain architecture, RNase III spans methionine 1 to glycine 131. Glutamate 44 is a Mg(2+) binding site. Aspartate 48 is a catalytic residue. Residues aspartate 117 and glutamate 120 each contribute to the Mg(2+) site. The active site involves glutamate 120. The region spanning aspartate 157 to asparagine 220 is the DRBM domain.

This sequence belongs to the ribonuclease III family. In terms of assembly, homodimer. Requires Mg(2+) as cofactor.

Its subcellular location is the cytoplasm. The enzyme catalyses Endonucleolytic cleavage to 5'-phosphomonoester.. In terms of biological role, digests double-stranded RNA. Involved in the processing of primary rRNA transcript to yield the immediate precursors to the large and small rRNAs (23S and 16S). Processes some mRNAs, and tRNAs when they are encoded in the rRNA operon. Processes pre-crRNA and tracrRNA of type II CRISPR loci if present in the organism. The protein is Ribonuclease 3 of Tropheryma whipplei (strain Twist) (Whipple's bacillus).